A 729-amino-acid chain; its full sequence is Cullin-6 (729 aa).

The Cullin neddylation domain maps to 659 to 720; sequence DRKYEIKACI…EQLYIRRSEN (62 aa). Lys-673 participates in a covalent cross-link: Glycyl lysine isopeptide (Lys-Gly) (interchain with G-Cter in NEDD8).

This sequence belongs to the cullin family. As to quaternary structure, probably interacts with skr-3. Post-translationally, neddylated; which enhances the ubiquitination activity of SCF-like complex.

Probable core component of cullin-based SCF-like E3 ubiquitin-protein ligase complexes which mediate the ubiquitination and subsequent proteasomal degradation of target proteins. The polypeptide is Cullin-6 (cul-6) (Caenorhabditis elegans).